The primary structure comprises 469 residues: Adenosylhomocysteinase (469 aa).

Substrate-binding residues include T63, D139, and E164. 165 to 167 contributes to the NAD(+) binding site; the sequence is TTT. Substrate is bound by residues K194 and D198. Residues N199, 228-233, E251, N300, 321-323, and N375 each bind NAD(+); these read GYGDVG and IGH.

This sequence belongs to the adenosylhomocysteinase family. It depends on NAD(+) as a cofactor.

It localises to the cytoplasm. It catalyses the reaction S-adenosyl-L-homocysteine + H2O = L-homocysteine + adenosine. Its pathway is amino-acid biosynthesis; L-homocysteine biosynthesis; L-homocysteine from S-adenosyl-L-homocysteine: step 1/1. Functionally, may play a key role in the regulation of the intracellular concentration of adenosylhomocysteine. This Ectopseudomonas mendocina (strain ymp) (Pseudomonas mendocina) protein is Adenosylhomocysteinase.